The chain runs to 369 residues: Flagellar P-ring protein (369 aa).

The first 22 residues, 1–22, serve as a signal peptide directing secretion; the sequence is MIKLKQLIAATLLLSTAFGVHA.

This sequence belongs to the FlgI family. In terms of assembly, the basal body constitutes a major portion of the flagellar organelle and consists of four rings (L,P,S, and M) mounted on a central rod.

Its subcellular location is the periplasm. It is found in the bacterial flagellum basal body. Its function is as follows. Assembles around the rod to form the L-ring and probably protects the motor/basal body from shearing forces during rotation. This chain is Flagellar P-ring protein, found in Pseudomonas savastanoi pv. phaseolicola (strain 1448A / Race 6) (Pseudomonas syringae pv. phaseolicola (strain 1448A / Race 6)).